Here is a 429-residue protein sequence, read N- to C-terminus: Glutamyl-tRNA reductase (429 aa).

Substrate-binding positions include 49 to 52 (TCNR), serine 107, 112 to 114 (EPQ), and glutamine 118. Cysteine 50 functions as the Nucleophile in the catalytic mechanism. NADP(+) is bound at residue 187 to 192 (GAGKTI).

The protein belongs to the glutamyl-tRNA reductase family. As to quaternary structure, homodimer.

The catalysed reaction is (S)-4-amino-5-oxopentanoate + tRNA(Glu) + NADP(+) = L-glutamyl-tRNA(Glu) + NADPH + H(+). It functions in the pathway porphyrin-containing compound metabolism; protoporphyrin-IX biosynthesis; 5-aminolevulinate from L-glutamyl-tRNA(Glu): step 1/2. Functionally, catalyzes the NADPH-dependent reduction of glutamyl-tRNA(Glu) to glutamate 1-semialdehyde (GSA). The sequence is that of Glutamyl-tRNA reductase from Marinobacter nauticus (strain ATCC 700491 / DSM 11845 / VT8) (Marinobacter aquaeolei).